Consider the following 329-residue polypeptide: Ribosomal RNA small subunit methyltransferase C (329 aa).

The protein belongs to the methyltransferase superfamily. RsmC family. As to quaternary structure, monomer.

The protein resides in the cytoplasm. The enzyme catalyses guanosine(1207) in 16S rRNA + S-adenosyl-L-methionine = N(2)-methylguanosine(1207) in 16S rRNA + S-adenosyl-L-homocysteine + H(+). Functionally, specifically methylates the guanine in position 1207 of 16S rRNA in the 30S particle. This Actinobacillus pleuropneumoniae serotype 7 (strain AP76) protein is Ribosomal RNA small subunit methyltransferase C.